Here is a 355-residue protein sequence, read N- to C-terminus: MSRPKNDTFLRALLKEPTEYTPLWLMRQAGRYLPEYCETRKRAGNFLNLCKSPTMACEVTLQPLARYDLDAAILFSDILTVPDAMGLGLYFAEGEGPKFERPLREEWAINNLTVTDPYEHLGYVMDAVSEIRRALDNSVPLIGFSGSPYTLACYMVEGEGSSDFRNIKAMLYNRPDLLHRILSVTADSVIAYLNAQIDSGAQAVMIFDTWGGSLSNAAYEEFSLQYMRRIVAGLKKEKDGQRIPSIVFTKNGGLWLEKIADIGCDAVGLDWTIDIGEARRRVGDKVALQGNLDPNVLFAQPEIVAAEAKKVLDSFGPANTGHVFNLGHGISQFTPPESVTALVEAVHSHSRLSRK.

Substrate-binding positions include 27–31, D77, Y154, T209, and H328; that span reads RQAGR.

It belongs to the uroporphyrinogen decarboxylase family. As to quaternary structure, homodimer.

It is found in the cytoplasm. It catalyses the reaction uroporphyrinogen III + 4 H(+) = coproporphyrinogen III + 4 CO2. It functions in the pathway porphyrin-containing compound metabolism; protoporphyrin-IX biosynthesis; coproporphyrinogen-III from 5-aminolevulinate: step 4/4. Functionally, catalyzes the decarboxylation of four acetate groups of uroporphyrinogen-III to yield coproporphyrinogen-III. The chain is Uroporphyrinogen decarboxylase from Dechloromonas aromatica (strain RCB).